Here is a 168-residue protein sequence, read N- to C-terminus: Disulfide bond formation protein B 1 (168 aa).

At 1–14 (MNEQTSRLNRERRF) the chain is on the cytoplasmic side. The chain crosses the membrane as a helical span at residues 15–31 (LVLLGLICLSLIGGALY). Over 32–49 (MQVVLGEAPCPLCILQRY) the chain is Periplasmic. Cys-41 and Cys-44 are oxidised to a cystine. The helical transmembrane segment at 50-65 (ALLFIAVFAFIAAAMP) threads the bilayer. Topologically, residues 66-72 (GRRSLTF) are cytoplasmic. The chain crosses the membrane as a helical span at residues 73 to 89 (FEALVVLSAIGGIVAAG). At 90–144 (NHVYILANPMVSCGIDTLQPIVDDLPLAKLWPLAFQVDGFCSTPYPPILGLSLAQ) the chain is on the periplasmic side. Cys-102 and Cys-130 form a disulfide bridge. The helical transmembrane segment at 145–163 (WALVAFVLTAVLVPLGIYR) threads the bilayer. At 164–168 (NRRQA) the chain is on the cytoplasmic side.

This sequence belongs to the DsbB family.

It is found in the cell inner membrane. Functionally, required for disulfide bond formation in some periplasmic proteins. Acts by oxidizing the DsbA protein. The polypeptide is Disulfide bond formation protein B 1 (dsbB1) (Pseudomonas putida (strain ATCC 47054 / DSM 6125 / CFBP 8728 / NCIMB 11950 / KT2440)).